The primary structure comprises 189 residues: Interleukin-23 subunit alpha (189 aa).

The N-terminal stretch at 1–19 (MLGSRAVMLLLLLPWTAQG) is a signal peptide. A disulfide bridge links C77 with C89.

Belongs to the IL-6 superfamily. In terms of assembly, heterodimer with IL12B; disulfide-linked. The heterodimer is known as interleukin IL-23. Interacts with IL23R; this interaction enables recruitment of IL12RB1. In terms of tissue distribution, secreted by activated dendritic and phagocytic cells and keratinocytes. Also expressed by dermal Langerhans cells (at protein level).

The protein resides in the secreted. In terms of biological role, associates with IL12B to form the pro-inflammatory cytokine IL-23 that plays different roles in innate and adaptive immunity. Released by antigen-presenting cells such as dendritic cells or macrophages, binds to a heterodimeric receptor complex composed of IL12RB1 and IL23R to activate JAK2 and TYK2 which then phosphorylate the receptor to form a docking site leading to the phosphorylation of STAT3 and STAT4. This process leads to activation of several pathways including p38 MAPK or NF-kappa-B and promotes the production of pro-inflammatory cytokines such as interleukin-17A/IL17A. In turn, participates in the early and effective intracellular bacterial clearance. Promotes the expansion and survival of T-helper 17 cells, a CD4-positive helper T-cell subset that produces IL-17, as well as other IL-17-producing cells. The chain is Interleukin-23 subunit alpha (IL23A) from Homo sapiens (Human).